A 465-amino-acid polypeptide reads, in one-letter code: Cysteine--tRNA ligase (465 aa).

Cys-27 provides a ligand contact to Zn(2+). The 'HIGH' region signature appears at Pro-29 to Asn-39. Cys-207, His-232, and Glu-236 together coordinate Zn(2+). Positions Lys-264–Ser-268 match the 'KMSKS' region motif. Lys-267 is an ATP binding site.

This sequence belongs to the class-I aminoacyl-tRNA synthetase family. Monomer. Zn(2+) is required as a cofactor.

It is found in the cytoplasm. It carries out the reaction tRNA(Cys) + L-cysteine + ATP = L-cysteinyl-tRNA(Cys) + AMP + diphosphate. This chain is Cysteine--tRNA ligase, found in Clostridium botulinum (strain Langeland / NCTC 10281 / Type F).